The sequence spans 525 residues: Peptide chain release factor 3 (525 aa).

Residues 9–276 (AKRRTFAIIS…GFTRYAPAPQ (268 aa)) form the tr-type G domain. GTP contacts are provided by residues 18-25 (SHPDAGKT), 86-90 (DTPGH), and 140-143 (NKFD).

This sequence belongs to the TRAFAC class translation factor GTPase superfamily. Classic translation factor GTPase family. PrfC subfamily.

Its subcellular location is the cytoplasm. In terms of biological role, increases the formation of ribosomal termination complexes and stimulates activities of RF-1 and RF-2. It binds guanine nucleotides and has strong preference for UGA stop codons. It may interact directly with the ribosome. The stimulation of RF-1 and RF-2 is significantly reduced by GTP and GDP, but not by GMP. This chain is Peptide chain release factor 3, found in Francisella tularensis subsp. tularensis (strain FSC 198).